The following is a 353-amino-acid chain: Photosystem II protein D1 (353 aa).

Position 2 is an N-acetylthreonine (T2). At T2 the chain carries Phosphothreonine. 3 consecutive transmembrane segments (helical) span residues 29-46 (YIGW…TATS), 118-133 (HFLL…EWEL), and 142-156 (WIAV…AATA). Residue H118 participates in chlorophyll a binding. Y126 provides a ligand contact to pheophytin a. Positions 170 and 189 each coordinate [CaMn4O5] cluster. Residues 197-218 (FHMLGVAGVFGGSLFSAMHGSL) traverse the membrane as a helical segment. H198 is a binding site for chlorophyll a. A quinone is bound by residues H215 and 264 to 265 (SF). H215 contacts Fe cation. Residue H272 coordinates Fe cation. A helical membrane pass occupies residues 274-288 (FLAAWPVVGIWFTAL). Residues H332, E333, D342, and A344 each coordinate [CaMn4O5] cluster. Positions 345–353 (AIEAPATNG) are excised as a propeptide.

This sequence belongs to the reaction center PufL/M/PsbA/D family. As to quaternary structure, PSII is composed of 1 copy each of membrane proteins PsbA, PsbB, PsbC, PsbD, PsbE, PsbF, PsbH, PsbI, PsbJ, PsbK, PsbL, PsbM, PsbT, PsbX, PsbY, PsbZ, Psb30/Ycf12, at least 3 peripheral proteins of the oxygen-evolving complex and a large number of cofactors. It forms dimeric complexes. The cofactor is The D1/D2 heterodimer binds P680, chlorophylls that are the primary electron donor of PSII, and subsequent electron acceptors. It shares a non-heme iron and each subunit binds pheophytin, quinone, additional chlorophylls, carotenoids and lipids. D1 provides most of the ligands for the Mn4-Ca-O5 cluster of the oxygen-evolving complex (OEC). There is also a Cl(-1) ion associated with D1 and D2, which is required for oxygen evolution. The PSII complex binds additional chlorophylls, carotenoids and specific lipids.. Tyr-161 forms a radical intermediate that is referred to as redox-active TyrZ, YZ or Y-Z. Post-translationally, C-terminally processed by CTPA; processing is essential to allow assembly of the oxygen-evolving complex and thus photosynthetic growth.

It localises to the plastid membrane. It carries out the reaction 2 a plastoquinone + 4 hnu + 2 H2O = 2 a plastoquinol + O2. Its function is as follows. Photosystem II (PSII) is a light-driven water:plastoquinone oxidoreductase that uses light energy to abstract electrons from H(2)O, generating O(2) and a proton gradient subsequently used for ATP formation. It consists of a core antenna complex that captures photons, and an electron transfer chain that converts photonic excitation into a charge separation. The D1/D2 (PsbA/PsbD) reaction center heterodimer binds P680, the primary electron donor of PSII as well as several subsequent electron acceptors. This is Photosystem II protein D1 from Cuscuta exaltata (Tall dodder).